Reading from the N-terminus, the 388-residue chain is Na(+)/H(+) antiporter NhaA (388 aa).

11 helical membrane passes run glycine 14–threonine 34, methionine 59–valine 79, alanine 95–phenylalanine 115, glycine 125–glycine 145, isoleucine 154–phenylalanine 174, leucine 179–leucine 199, valine 219–leucine 239, valine 254–valine 274, isoleucine 287–phenylalanine 307, isoleucine 328–leucine 348, and alanine 356–glycine 376.

Belongs to the NhaA Na(+)/H(+) (TC 2.A.33) antiporter family.

It is found in the cell inner membrane. It catalyses the reaction Na(+)(in) + 2 H(+)(out) = Na(+)(out) + 2 H(+)(in). Na(+)/H(+) antiporter that extrudes sodium in exchange for external protons. This is Na(+)/H(+) antiporter NhaA from Citrobacter koseri (strain ATCC BAA-895 / CDC 4225-83 / SGSC4696).